A 539-amino-acid polypeptide reads, in one-letter code: Glycerol kinase (539 aa).

Position 49 (T49) interacts with ADP. T49, T50, and S51 together coordinate ATP. Residue T49 coordinates sn-glycerol 3-phosphate. ADP is bound at residue R53. Sn-glycerol 3-phosphate contacts are provided by R119, E120, Y171, and D280. Positions 119, 120, 171, 280, and 281 each coordinate glycerol. 2 residues coordinate ADP: T302 and G345. Residues T302, G345, Q349, and G446 each contribute to the ATP site. G446 and N450 together coordinate ADP.

It belongs to the FGGY kinase family.

The catalysed reaction is glycerol + ATP = sn-glycerol 3-phosphate + ADP + H(+). It functions in the pathway polyol metabolism; glycerol degradation via glycerol kinase pathway; sn-glycerol 3-phosphate from glycerol: step 1/1. With respect to regulation, inhibited by fructose 1,6-bisphosphate (FBP). Key enzyme in the regulation of glycerol uptake and metabolism. Catalyzes the phosphorylation of glycerol to yield sn-glycerol 3-phosphate. In Rhodopirellula baltica (strain DSM 10527 / NCIMB 13988 / SH1), this protein is Glycerol kinase.